The following is a 470-amino-acid chain: Nuclear receptor subfamily 0 group B member 1 (470 aa).

3 repeat units span residues 1–67 (MAGE…YRCC), 68–133 (FCGK…YRCC), and 134–200 (FCGE…YRCC). The segment at 1 to 253 (MAGENHQWQG…RPVALKNPQV (253 aa)) is 4 X 67 AA tandem repeats. 3 short sequence motifs (LXXLL motif) span residues 13–17 (LYNML), 80–84 (LYSML), and 146–150 (LYSLL). The stretch at 201 to 253 (FCGEDHPQQGSTLYCMPTSTNQAQAAPEERPRAPWWDTSSGALRPVALKNPQV) is one 4; truncated repeat. Residues 205-469 (DHPQQGSTLY…DMMLEMLCTK (265 aa)) form the NR LBD domain. The AF-2 motif signature appears at 461-466 (MMLEML).

It belongs to the nuclear hormone receptor family. NR0 subfamily. Homodimer. Interacts with NR5A1, NR5A2, NR0B2 and with COPS2. Interacts with ESRRB; represses ESRRB activity at the GATA6 promoter.

The protein resides in the nucleus. Its subcellular location is the cytoplasm. Functionally, nuclear receptor that lacks a DNA-binding domain and acts as a corepressor that inhibits the transcriptional activity of other nuclear receptors through heterodimeric interactions. Component of a cascade required for the development of the hypothalamic-pituitary-adrenal-gonadal axis. May also have a role in the development of the embryo and in the maintenance of embryonic stem cell pluripotency. This chain is Nuclear receptor subfamily 0 group B member 1 (NR0B1), found in Macaca mulatta (Rhesus macaque).